Here is a 185-residue protein sequence, read N- to C-terminus: Ribosome-recycling factor (185 aa).

Belongs to the RRF family.

The protein localises to the cytoplasm. Its function is as follows. Responsible for the release of ribosomes from messenger RNA at the termination of protein biosynthesis. May increase the efficiency of translation by recycling ribosomes from one round of translation to another. In Campylobacter fetus subsp. fetus (strain 82-40), this protein is Ribosome-recycling factor.